Here is a 1154-residue protein sequence, read N- to C-terminus: MAKTIDFLASDGEDNFAARTISATSKPNRNDATASSSKPQKRARRSTKGSDDDGNDDFDIASSLLASAAEPAAVGMLSSSQQASQKAYASRVSAKDDDDDDARFIASVMQHANIKAGLEVAKKALSGKNKGKNKLGSGVVTGGGSFQSMGLHPSLLRSLLIRGFTTPTPIQRQAIPAIMSQPPRDVVGMARTGSGKTLAYLIPLINRLNGRHSPTFGIKSLILCPSRELAVQILRVGKEIARGWKADAGEGQDSRGEAIRWAIIVGGESLDEQFGIMSNNPDVVIATPGRMLHLTVEMNLDLKSVEYVVFDEADRLFEMGFAEQLEEMLLRLPPTRQTLLFSATLPKKLVEFTKAGLQANPKLVRLDADSKISADLRMAFFSVKPSEKEAALLVLLRDVIGVPLGEQAARDLDEEAQFNEDASDNQADGQRSRGYGNRRAEFKGKTKDKHLGNKRKRGGPGGALELLPHQTIIFCATKHHVEYLLLLLTTTGYACSHIYSSLDQATRGIQMSRFRRGQNSLLIVTDVAARGIDLPVLEHVVNFDFPPQPRTFVHRVGRTARAGRNGWAWSMCTNAELPYLCDLQLFLARPLVSSHTAIAALANGRDVASADALGLHDSLILGTLPREALDLETEFISSSLTNTSSSTAHDFPALRAVADRAQQKYEKSIAKASQESHRRAKEMVKLGSIEQINIRTASGREGQVPEWTLAGSPLEEMAVHDVVKRPEVYGLNRANKADAVTSALGSDRMDDKVKRGTDNALKEADEAAKRAALLAKVNAFRPQETVFEIGIRGDATPLGALMRSRRQTMQVKTKRAEALEARKRAIEGGGDAMEDDEEVTKPKVAARNKGKKKATAGKADNDEAVVGDAMVDMEQADEADILAAFDTTKPSKAQVQREALTDSETDASESDRDAASARHTKRARTKKAAPTSYRDPNFYLSYEQQGSTSERGYSLNNARSHTDSFIQQASAVSFDLAGDDATLGTQSQRPNVTRWDSKKKNFIQATVGADNKKMIRTESGVRLPASFRSGRYEDWKREKRIDMPKTGEIESNNHRVHERSPPETSVMGLKRFRHTKLSAPKTAGVFGNRRPGQPKRQAAKDEVKSARQIQKDRELKEKRREKNARPSKSDTNRRAKRGAARRGRGGHGPRGASR.

A disordered region spans residues 16 to 58 (FAARTISATSKPNRNDATASSSKPQKRARRSTKGSDDDGNDDF). Over residues 21 to 38 (ISATSKPNRNDATASSSK) the composition is skewed to polar residues. The short motif at 144-172 (GSFQSMGLHPSLLRSLLIRGFTTPTPIQR) is the Q motif element. The region spanning 177 to 363 (AIMSQPPRDV…KAGLQANPKL (187 aa)) is the Helicase ATP-binding domain. 190-197 (ARTGSGKT) lines the ATP pocket. The DEAD box signature appears at 311–314 (DEAD). Disordered stretches follow at residues 417 to 462 (QFNE…GPGG), 826 to 859 (IEGGGDAMEDDEEVTKPKVAARNKGKKKATAGKA), 885 to 939 (FDTT…PNFY), and 1043 to 1154 (MPKT…GASR). The segment covering 438-451 (RRAEFKGKTKDKHL) has biased composition (basic and acidic residues). Residues 446–602 (TKDKHLGNKR…SSHTAIAALA (157 aa)) form the Helicase C-terminal domain. Basic residues-rich tracts occupy residues 844–855 (VAARNKGKKKAT) and 918–927 (RHTKRARTKK). Composition is skewed to basic and acidic residues over residues 1043–1061 (MPKTGEIESNNHRVHERSP) and 1098–1133 (AAKDEVKSARQIQKDRELKEKRREKNARPSKSDTNR). Residues 1134 to 1154 (RAKRGAARRGRGGHGPRGASR) show a composition bias toward basic residues.

Belongs to the DEAD box helicase family. DDX54/DBP10 subfamily.

Its subcellular location is the nucleus. The protein resides in the nucleolus. It catalyses the reaction ATP + H2O = ADP + phosphate + H(+). Functionally, ATP-binding RNA helicase involved in the biogenesis of 60S ribosomal subunits and is required for the normal formation of 25S and 5.8S rRNAs. This chain is ATP-dependent RNA helicase DBP10 (DBP10), found in Mycosarcoma maydis (Corn smut fungus).